Reading from the N-terminus, the 292-residue chain is Acidic endochitinase (292 aa).

The N-terminal stretch at 1-25 is a signal peptide; it reads MAAHKITTTLSIFFLLSSIFRSSDA. A GH18 domain is found at 26–292; it reads AGIAIYWGQN…YSDSIKGSIG (267 aa). Disulfide bonds link Cys45–Cys92 and Cys75–Cys82. Catalysis depends on Glu152, which acts as the Proton donor. A disulfide bridge connects residues Cys180 and Cys209.

This sequence belongs to the glycosyl hydrolase 18 family. Chitinase class II subfamily.

It localises to the secreted. It is found in the extracellular space. It carries out the reaction Random endo-hydrolysis of N-acetyl-beta-D-glucosaminide (1-&gt;4)-beta-linkages in chitin and chitodextrins.. Functionally, this protein functions as a defense against chitin containing fungal pathogens. This chain is Acidic endochitinase, found in Cucumis sativus (Cucumber).